The sequence spans 235 residues: Peroxynitrite isomerase 2 (235 aa).

The short motif at 82–88 (GVWRGEG) is the GXWXGXG element. The heme b site is built by Lys198 and His225.

The protein belongs to the nitrobindin family. In terms of assembly, homodimer. Requires heme b as cofactor.

It carries out the reaction peroxynitrite = nitrate. It participates in nitrogen metabolism. Heme-binding protein able to scavenge peroxynitrite and to protect free L-tyrosine against peroxynitrite-mediated nitration, by acting as a peroxynitrite isomerase that converts peroxynitrite to nitrate. Therefore, this protein likely plays a role in peroxynitrite sensing and in the detoxification of reactive nitrogen and oxygen species (RNS and ROS, respectively). Is able to bind nitric oxide (NO) in vitro, but may act as a sensor of peroxynitrite levels in vivo. The polypeptide is Peroxynitrite isomerase 2 (Mycolicibacterium paratuberculosis (strain ATCC BAA-968 / K-10) (Mycobacterium paratuberculosis)).